A 360-amino-acid chain; its full sequence is Snurportin-1 (360 aa).

Position 1 is an N-acetylmethionine (M1). Positions 1–42 (MEELSQALASSFSVSQDLNSTAAPHPRLSQYKSKYSSLEQSE) are disordered. The interval 1 to 65 (MEELSQALAS…LDYVNHARRL (65 aa)) is necessary for interaction with KPNB1 and m3G-cap U1 and U5 snRNP import receptor activity. Residues 1–159 (MEELSQALAS…NRFSSLLPGG (159 aa)) are necessary for interaction with XPO1. The segment covering 7–22 (ALASSFSVSQDLNSTA) has biased composition (polar residues). One can recognise an IBB domain in the interval 11-73 (SFSVSQDLNS…RLAEDDWTGM (63 aa)). S75 carries the phosphoserine modification. The tract at residues 127-129 (GKR) is interaction with m3G-cap structure. Residues 208 to 328 (MHSKLPEEEG…GMKEKLTHKA (121 aa)) form a necessary for binding to the m3G-cap structure region. Positions 339-360 (LSTPKLKGSSHSPDHPGCLMEN) are disordered. The residue at position 350 (S350) is a Phosphoserine.

Belongs to the snurportin family. In terms of assembly, component of an import snRNP complex composed of KPNB1, SNUPN, SMN1 and ZNF259. Component of a nuclear export receptor complex composed of KPNB1, Ran, SNUPN and XPO1. Found in a trimeric export complex with SNUPN, Ran and XPO1. Interacts (via IBB domain) with KPNB1; the interaction is direct. Interacts with DDX20, IPO7, SMN1, SNRPB and XPO1. Interacts directly with XPO1. Its interaction with XPO1 and binding to m3G-cap U snRNPs appears to be mutually exclusive. Can form homomers.

The protein localises to the nucleus. Its subcellular location is the cytoplasm. In terms of biological role, functions as an U snRNP-specific nuclear import adapter. Involved in the trimethylguanosine (m3G)-cap-dependent nuclear import of U snRNPs. Binds specifically to the terminal m3G-cap U snRNAs. This chain is Snurportin-1 (SNUPN), found in Homo sapiens (Human).